A 247-amino-acid chain; its full sequence is Probable dihydroorotate dehydrogenase B (NAD(+)), electron transfer subunit (247 aa).

Positions 1–87 constitute an FAD-binding FR-type domain; the sequence is MLRRVMIKET…RGPYGNGFKS (87 aa). Residues C200, C205, C208, and C216 each contribute to the [2Fe-2S] cluster site.

Belongs to the PyrK family. As to quaternary structure, heterotetramer of 2 PyrK and 2 PyrD type B subunits. The cofactor is [2Fe-2S] cluster. FAD is required as a cofactor.

It functions in the pathway pyrimidine metabolism; UMP biosynthesis via de novo pathway; orotate from (S)-dihydroorotate (NAD(+) route): step 1/1. Functionally, responsible for channeling the electrons from the oxidation of dihydroorotate from the FMN redox center in the PyrD type B subunit to the ultimate electron acceptor NAD(+). The polypeptide is Probable dihydroorotate dehydrogenase B (NAD(+)), electron transfer subunit (Pyrococcus abyssi (strain GE5 / Orsay)).